We begin with the raw amino-acid sequence, 2280 residues long: Protein Ycf2 (2280 aa).

Gly1631 to Ser1638 lines the ATP pocket.

Belongs to the Ycf2 family.

It localises to the plastid. The protein resides in the chloroplast stroma. Its function is as follows. Probable ATPase of unknown function. Its presence in a non-photosynthetic plant (Epifagus virginiana) and experiments in tobacco indicate that it has an essential function which is probably not related to photosynthesis. This Nicotiana tomentosiformis (Tobacco) protein is Protein Ycf2.